We begin with the raw amino-acid sequence, 324 residues long: Uric acid degradation bifunctional protein TTL (324 aa).

Alanine 2 bears the N-acetylalanine mark. The required for BRI1-binding stretch occupies residues 2–29 (AMEIGEDEWKVCCGSSEFAKQMSTSGPL). An OHCU decarboxylase region spans residues 2–161 (AMEIGEDEWK…LRMAKLFSDK (160 aa)). The active-site Proton donor; for OHCU decarboxylase activity is histidine 58. Histidine 58, proline 59, glutamate 80, phenylalanine 111, isoleucine 113, and alanine 115 together coordinate (S)-allantoin. An HIU hydrolase region spans residues 178–324 (KPQDRLRIIG…PFSFSTYRGS (147 aa)). The Internal peroxisomal targeting signal (PTS2) motif lies at 182-190 (RLRIIGGHL).

This sequence in the N-terminal section; belongs to the OHCU decarboxylase family. The protein in the C-terminal section; belongs to the transthyretin family. 5-hydroxyisourate hydrolase subfamily. As to quaternary structure, homodimer. Forms tetramers. Interacts with BRI1 in a kinase-dependent manner. Interacts with B1L. In terms of processing, phosphorylated by BRI1 in vitro. Expressed ubiquitously with highest levels in flowers buds and elongating inflorescences. As to expression, mainly expressed in stems and leaves, and, to a lower extent, in flowers, flower buds and seedlings. In terms of tissue distribution, strongly expressed in flower buds and leaves, to a lower extent in stems, and at low levels in seedlings and flowers.

The protein resides in the cell membrane. The protein localises to the peroxisome. Its subcellular location is the cytoplasm. It is found in the cytosol. The catalysed reaction is 5-hydroxyisourate + H2O = 5-hydroxy-2-oxo-4-ureido-2,5-dihydro-1H-imidazole-5-carboxylate + H(+). It carries out the reaction 5-hydroxy-2-oxo-4-ureido-2,5-dihydro-1H-imidazole-5-carboxylate + H(+) = (S)-allantoin + CO2. It functions in the pathway purine metabolism; urate degradation; (S)-allantoin from urate: step 2/3. Its pathway is purine metabolism; urate degradation; (S)-allantoin from urate: step 3/3. In terms of biological role, involved in the last two steps of the degradation of uric acid, i.e. the hydrolysis of 5-hydroxyisourate (HIU) to 2-oxo-4-hydroxy-4-carboxy-5-ureidoimidazoline (OHCU) and its stereoselective decarboxylation to (S)-allantoin, a major ureide compound. Might function as a negative regulator to modulate brassinosteroid-mediated plant growth. Together with B1L, prevents plant growth and development, but by opposition to B1L, negatively regulates cold tolerance, probably in a brassinosteroid (BR) and allantoin-dependent manner. This is Uric acid degradation bifunctional protein TTL from Arabidopsis thaliana (Mouse-ear cress).